The following is a 311-amino-acid chain: D-allose-binding periplasmic protein (311 aa).

A signal peptide spans 1–23 (MNKYLKYFSGTLVGLMLSTSAFA).

It belongs to the bacterial solute-binding protein 2 family.

The protein resides in the periplasm. Its function is as follows. Part of the binding-protein-dependent transport system AlsBAC for D-allose. In Escherichia coli (strain K12), this protein is D-allose-binding periplasmic protein (alsB).